Consider the following 466-residue polypeptide: Coagulation factor IX (466 aa).

The first 25 residues, 1–25 (MRCLNMIMAEPPGLITICLLGYLLG), serve as a signal peptide directing secretion. A propeptide spanning residues 26 to 46 (ADCTVFLDHEDATKVLSRPKR) is cleaved from the precursor. Residues Y47, N48, E53, E54, E61, E63, E66, E67, E72, E73, and E76 each contribute to the Ca(2+) site. A Gla domain is found at 47–92 (YNSGKLEEFVQGNLERECMEEKCSFEEAREVFENTEKTTEFWKQYV). 4-carboxyglutamate is present on residues E53, E54, E61, E63, E66, E67, E72, E73, E76, E79, and E82. A Mg(2+)-binding site is contributed by E61. C64 and C69 are disulfide-bonded. Position 66 (E66) interacts with Mg(2+). E72 lines the Mg(2+) pocket. Residue E76 participates in Mg(2+) binding. E82 lines the Ca(2+) pocket. A Mg(2+)-binding site is contributed by E82. An O-linked (GalNAc...) threonine glycan is attached at T85. Ca(2+) is bound by residues E86, D93, G94, and Q96. Residue E86 is modified to 4-carboxyglutamate. A Mg(2+)-binding site is contributed by E86. Positions 93-129 (DGDQCESNPCLNGGICKDDINSYECWCQTGFEGKNCE) constitute an EGF-like 1; calcium-binding domain. Disulfide bonds link C97/C108, C102/C117, C119/C128, C134/C145, C141/C155, C157/C170, C178/C340, C257/C273, C387/C401, and C412/C440. Residue S99 is glycosylated (O-linked (Glc...) serine). D110 and D111 together coordinate Ca(2+). D110 carries the (3R)-3-hydroxyaspartate modification. The residue at position 114 (S114) is a Phosphoserine. Positions 130 to 171 (LDVTCNIKNGRCKQFCKLDADNKVVCSCTTGYQLAEDQKSCE) constitute an EGF-like 2 domain. Positions 193–231 (AETLFLNMDYENSTTDYENSAEAEKNVDNVTQPLNDLTR) are cleaved as a propeptide — activation peptide. Y202 bears the Sulfotyrosine mark. At S205 the chain carries Phosphoserine. T206 carries the phosphothreonine; alternate modification. O-linked (GalNAc...) threonine; alternate glycosylation is present at T206. A glycan (N-linked (GlcNAc...) asparagine) is linked at N221. Residues T223 and T230 are each glycosylated (O-linked (GalNAc...) threonine). Residues 232-464 (IVGGKTAKPG…YVNWIKEKTK (233 aa)) enclose the Peptidase S1 domain. H272 serves as the catalytic Charge relay system. Ca(2+)-binding residues include E286, N288, E291, E293, and E296. D320 (charge relay system) is an active-site residue. S416 serves as the catalytic Charge relay system.

Belongs to the peptidase S1 family. Heterodimer of a light chain and a heavy chain; disulfide-linked. Interacts (inactive and activated) with F11 (activated) in calcium-dependent manner. Interacts with SERPINC1. In terms of processing, the iron and 2-oxoglutarate dependent 3-hydroxylation of aspartate and asparagine is (R) stereospecific within EGF domains. Post-translationally, activated by factor XIa, which excises the activation peptide. The propeptide can also be removed by snake venom protease. Activated by coagulation factor VIIa-tissue factor (F7-F3) complex in calcium-dependent manner. Predominantly O-glucosylated at Ser-99 by POGLUT1 in vitro.

The protein localises to the secreted. It catalyses the reaction Selective cleavage of Arg-|-Ile bond in factor X to form factor Xa.. In terms of biological role, factor IX is a vitamin K-dependent plasma protein that participates in the intrinsic pathway of blood coagulation by converting factor X to its active form in the presence of Ca(2+) ions, phospholipids, and factor VIIIa. The chain is Coagulation factor IX (F9) from Felis catus (Cat).